Here is a 127-residue protein sequence, read N- to C-terminus: UPF0102 protein Geob_1494 (127 aa).

Belongs to the UPF0102 family.

This Geotalea daltonii (strain DSM 22248 / JCM 15807 / FRC-32) (Geobacter daltonii) protein is UPF0102 protein Geob_1494.